Reading from the N-terminus, the 162-residue chain is Endoribonuclease YbeY (162 aa).

Zn(2+) contacts are provided by H117, H121, and H127.

The protein belongs to the endoribonuclease YbeY family. Zn(2+) serves as cofactor.

The protein localises to the cytoplasm. Functionally, single strand-specific metallo-endoribonuclease involved in late-stage 70S ribosome quality control and in maturation of the 3' terminus of the 16S rRNA. This is Endoribonuclease YbeY from Francisella tularensis subsp. tularensis (strain WY96-3418).